The sequence spans 634 residues: Probable potassium transport system protein Kup (634 aa).

The next 12 membrane-spanning stretches (helical) occupy residues 19–39, 62–82, 113–133, 150–170, 177–197, 225–245, 259–279, 291–311, 349–369, 379–399, 406–426, and 431–451; these read AIGL…TSPL, VLSL…VIFV, FVVV…MITP, GLEH…FLIQ, IGIL…ALGV, IGVA…ALYA, WFLL…ATIL, LLAP…ATVI, IYIG…VLGF, YGVA…VVIW, LWLG…FFAA, and VIQG…LMST.

This sequence belongs to the HAK/KUP transporter (TC 2.A.72) family.

It localises to the cell inner membrane. The catalysed reaction is K(+)(in) + H(+)(in) = K(+)(out) + H(+)(out). Transport of potassium into the cell. Likely operates as a K(+):H(+) symporter. This chain is Probable potassium transport system protein Kup, found in Pseudomonas aeruginosa (strain UCBPP-PA14).